A 382-amino-acid polypeptide reads, in one-letter code: Plasmid replication initiator protein TrfA (382 aa).

The toxic in E.coli strain K12 / DH5-alpha; may be membrane-associated stretch occupies residues 1–163 (MNRTFDRKAY…TARSALFTTR (163 aa)). The segment at residues 246-265 (SRLQATAMGFTSDRVGHLES) is a DNA-binding region (H-T-H motif). The tract at residues 286-297 (VLIDEEIVVLFA) is hydrophobic region (HR); required for membrane association.

In terms of assembly, forms a dimer in solution, binds DNA as a monomer. Both mononer and dimer of the short form interact with Hda (Dp).

It is found in the cell inner membrane. Required for initiation of plasmid DNA replication, along with host-derived DnaA and other host proteins. Both forms of the protein are capable of initiating plasmid replication in a number of Gram-negative bacteria. Binds to 8 17-base pair repeat sequences (iterons) in the RK2 minimal replication origin (oriV), opening the origin of replication. oriV opening does not absolutely require the presence of nucleotides; formation of open complex is somewhat enhanced by ATP or ATP gamma S, while DnaA or HU is required for full opening. In terms of biological role, also involved in plasmid copy number control, promoting intermolecular coupling of protein bound iterons at oriV, which inhibits replication initiation. This is Plasmid replication initiator protein TrfA (trfA) from Escherichia coli.